A 335-amino-acid polypeptide reads, in one-letter code: Phenylalanine--tRNA ligase alpha subunit (335 aa).

Glu-262 is a binding site for Mg(2+).

The protein belongs to the class-II aminoacyl-tRNA synthetase family. Phe-tRNA synthetase alpha subunit type 1 subfamily. In terms of assembly, tetramer of two alpha and two beta subunits. Mg(2+) serves as cofactor.

It localises to the cytoplasm. It catalyses the reaction tRNA(Phe) + L-phenylalanine + ATP = L-phenylalanyl-tRNA(Phe) + AMP + diphosphate + H(+). The protein is Phenylalanine--tRNA ligase alpha subunit of Prochlorococcus marinus subsp. pastoris (strain CCMP1986 / NIES-2087 / MED4).